The chain runs to 207 residues: Large ribosomal subunit protein uL4 (207 aa).

Residues 49-77 (HAVKNRSAVRGGGKKPWRQKGTGRARQGS) form a disordered region. Basic residues predominate over residues 60-71 (GGKKPWRQKGTG).

Belongs to the universal ribosomal protein uL4 family. As to quaternary structure, part of the 50S ribosomal subunit.

Its function is as follows. One of the primary rRNA binding proteins, this protein initially binds near the 5'-end of the 23S rRNA. It is important during the early stages of 50S assembly. It makes multiple contacts with different domains of the 23S rRNA in the assembled 50S subunit and ribosome. Functionally, forms part of the polypeptide exit tunnel. This chain is Large ribosomal subunit protein uL4, found in Levilactobacillus brevis (strain ATCC 367 / BCRC 12310 / CIP 105137 / JCM 1170 / LMG 11437 / NCIMB 947 / NCTC 947) (Lactobacillus brevis).